The sequence spans 340 residues: Phosphatidylglycerol--prolipoprotein diacylglyceryl transferase (340 aa).

Helical transmembrane passes span 19-39 (IPLR…VWLG), 54-74 (ADIA…YHVI), 93-113 (IWEG…GAWI), and 119-139 (GIPL…AQAF). R141 serves as a coordination point for a 1,2-diacyl-sn-glycero-3-phospho-(1'-sn-glycerol). A run of 3 helical transmembrane segments spans residues 176–196 (HPTF…VIWA), 202–221 (LGHG…GRAW), and 238–258 (LNDW…VLSS). Residues 266–340 (EIVEPGASDT…ESAAESAKKV (75 aa)) form a disordered region. A compositionally biased stretch (basic and acidic residues) spans 284-294 (DLGKDEDKATT). Residues 295–307 (DKATATDTSTTTD) show a composition bias toward low complexity. The segment covering 326-340 (PSEKTESAAESAKKV) has biased composition (basic and acidic residues).

The protein belongs to the Lgt family.

The protein resides in the cell membrane. It carries out the reaction L-cysteinyl-[prolipoprotein] + a 1,2-diacyl-sn-glycero-3-phospho-(1'-sn-glycerol) = an S-1,2-diacyl-sn-glyceryl-L-cysteinyl-[prolipoprotein] + sn-glycerol 1-phosphate + H(+). It functions in the pathway protein modification; lipoprotein biosynthesis (diacylglyceryl transfer). Functionally, catalyzes the transfer of the diacylglyceryl group from phosphatidylglycerol to the sulfhydryl group of the N-terminal cysteine of a prolipoprotein, the first step in the formation of mature lipoproteins. This chain is Phosphatidylglycerol--prolipoprotein diacylglyceryl transferase, found in Streptomyces avermitilis (strain ATCC 31267 / DSM 46492 / JCM 5070 / NBRC 14893 / NCIMB 12804 / NRRL 8165 / MA-4680).